The primary structure comprises 174 residues: UPF0316 protein LMOf2365_1801 (174 aa).

Transmembrane regions (helical) follow at residues 4–24 (GIFI…IYTV), 36–56 (LAAL…SLVL), and 62–82 (IANV…GMKI).

It belongs to the UPF0316 family.

Its subcellular location is the cell membrane. In Listeria monocytogenes serotype 4b (strain F2365), this protein is UPF0316 protein LMOf2365_1801.